Consider the following 294-residue polypeptide: ATP synthase gamma chain (294 aa).

Belongs to the ATPase gamma chain family. As to quaternary structure, F-type ATPases have 2 components, CF(1) - the catalytic core - and CF(0) - the membrane proton channel. CF(1) has five subunits: alpha(3), beta(3), gamma(1), delta(1), epsilon(1). CF(0) has three main subunits: a, b and c.

It is found in the cell inner membrane. Functionally, produces ATP from ADP in the presence of a proton gradient across the membrane. The gamma chain is believed to be important in regulating ATPase activity and the flow of protons through the CF(0) complex. The sequence is that of ATP synthase gamma chain from Paramagnetospirillum magneticum (strain ATCC 700264 / AMB-1) (Magnetospirillum magneticum).